A 339-amino-acid polypeptide reads, in one-letter code: 3-isopropylmalate dehydrogenase (339 aa).

Substrate contacts are provided by Arg87, Arg97, Arg124, and Asp214. Mg(2+)-binding residues include Asp214, Asp238, and Asp242. 274–286 lines the NAD(+) pocket; that stretch reads GSAPDIAGQGIAD.

It belongs to the isocitrate and isopropylmalate dehydrogenases family. LeuB type 2 subfamily. Homodimer. The cofactor is Mg(2+). It depends on Mn(2+) as a cofactor.

Its subcellular location is the cytoplasm. The catalysed reaction is (2R,3S)-3-isopropylmalate + NAD(+) = 4-methyl-2-oxopentanoate + CO2 + NADH. It participates in amino-acid biosynthesis; L-leucine biosynthesis; L-leucine from 3-methyl-2-oxobutanoate: step 3/4. Functionally, catalyzes the oxidation of 3-carboxy-2-hydroxy-4-methylpentanoate (3-isopropylmalate) to 3-carboxy-4-methyl-2-oxopentanoate. The product decarboxylates to 4-methyl-2 oxopentanoate. The sequence is that of 3-isopropylmalate dehydrogenase from Mycobacterium marinum (strain ATCC BAA-535 / M).